Consider the following 274-residue polypeptide: 4-deoxy-L-threo-5-hexosulose-uronate ketol-isomerase (274 aa).

Zn(2+) contacts are provided by histidine 192, histidine 194, glutamate 199, and histidine 241.

The protein belongs to the KduI family. It depends on Zn(2+) as a cofactor.

It catalyses the reaction 5-dehydro-4-deoxy-D-glucuronate = 3-deoxy-D-glycero-2,5-hexodiulosonate. It functions in the pathway glycan metabolism; pectin degradation; 2-dehydro-3-deoxy-D-gluconate from pectin: step 4/5. Catalyzes the isomerization of 5-dehydro-4-deoxy-D-glucuronate to 3-deoxy-D-glycero-2,5-hexodiulosonate. This is 4-deoxy-L-threo-5-hexosulose-uronate ketol-isomerase from Shigella boydii serotype 18 (strain CDC 3083-94 / BS512).